A 243-amino-acid chain; its full sequence is Killer cell lectin-like receptor subfamily I member 1 (243 aa).

At 1 to 80 (MPHSKHRDYT…RQGPKSAVWR (80 aa)) the chain is on the cytoplasmic side. 2 consecutive short sequence motifs (ITIM motif) follow at residues 16-21 (IPYTEL) and 47-52 (LKYAEL). The helical; Signal-anchor for type II membrane protein transmembrane segment at 81-101 (VVTCVLGVLCVVLMITMGILV) threads the bilayer. Over 102–243 (PKLFSGQEEQ…KPYACEFNKM (142 aa)) the chain is Extracellular. N-linked (GlcNAc...) asparagine glycosylation is found at Asn123, Asn191, Asn194, Asn200, and Asn214. The region spanning 137 to 239 (FGNNFYLFFR…CSSKKPYACE (103 aa)) is the C-type lectin domain. Disulfide bonds link Cys158/Cys238 and Cys217/Cys230.

Heterodimer with KLRE1. Interacts with PTPN6. In terms of tissue distribution, expressed in natural killer (NK) cells.

The protein resides in the cell membrane. Lectin-like receptor for natural killer (NK) cells. Heterodimer formation with KLRE1 mediates inhibition of NK cell cytolytic activity. The protein is Killer cell lectin-like receptor subfamily I member 1 of Rattus norvegicus (Rat).